The sequence spans 197 residues: Peptide deformylase (197 aa).

The Fe cation site is built by C106 and H148. Residue E149 is part of the active site. A Fe cation-binding site is contributed by H152.

It belongs to the polypeptide deformylase family. The cofactor is Fe(2+).

The catalysed reaction is N-terminal N-formyl-L-methionyl-[peptide] + H2O = N-terminal L-methionyl-[peptide] + formate. Functionally, removes the formyl group from the N-terminal Met of newly synthesized proteins. Requires at least a dipeptide for an efficient rate of reaction. N-terminal L-methionine is a prerequisite for activity but the enzyme has broad specificity at other positions. This chain is Peptide deformylase, found in Mycolicibacterium vanbaalenii (strain DSM 7251 / JCM 13017 / BCRC 16820 / KCTC 9966 / NRRL B-24157 / PYR-1) (Mycobacterium vanbaalenii).